Consider the following 1122-residue polypeptide: Phytochrome A (1122 aa).

Over residues methionine 1–glutamate 11 the composition is skewed to polar residues. The disordered stretch occupies residues methionine 1–arginine 21. The region spanning serine 218–valine 402 is the GAF domain. Cysteine 323 lines the phytochromobilin pocket. One can recognise a PAS 1 domain in the interval valine 618–threonine 688. The PAC domain occupies phenylalanine 695–arginine 747. Residues isoleucine 748–glycine 822 enclose the PAS 2 domain. In terms of domain architecture, Histidine kinase spans tyrosine 902–alanine 1119.

It belongs to the phytochrome family. In terms of assembly, homodimer. Interacts with NDPK2 and PKS4. Stabilized by interactions with PAPP5 and FYPP3 which are enhanced in the phosphorylated Pfr form. Interacts with COP1/SPA1 complex. Binds, via its photosensory domain, to PTAC12/HMR when photoactivated; this interaction stimulates its localization to photobodies. Interacts with FHY1, FHL and FHY3, especially upon far-red (FR) light illumination; when underphosphorylated. Forms PHYA/FHY1/HFR1 complex. Binds to PIF3/PAP3. Post-translationally, phosphorylated. In terms of processing, contains one covalently linked phytochromobilin chromophore. Expressed in fruits, flowers, leaves, stems, seedlings and roots.

It localises to the cytoplasm. The protein localises to the nucleus. It is found in the nucleoplasm. Its subcellular location is the nucleus speckle. In terms of biological role, regulatory photoreceptor which exists in two forms that are reversibly interconvertible by light: the Pr form that absorbs maximally in the red region of the spectrum and the Pfr form that absorbs maximally in the far-red region. Photoconversion of Pr to Pfr induces an array of morphogenetic responses, whereas reconversion of Pfr to Pr cancels the induction of those responses. Pfr controls the expression of a number of nuclear genes including those encoding the small subunit of ribulose-bisphosphate carboxylase, chlorophyll A/B binding protein, protochlorophyllide reductase, rRNA, etc. It also controls the expression of its own gene(s) in a negative feedback fashion. Involved in the flowering time regulation. Can phosphorylate FHY1 and, possibly, FHL, in red light conditions; this inactivates their co-shuttling to the nucleus. Regulates phototropic responses both in the nucleus (e.g. hypocotyl elongation and cotyledon opening under high-irradiance conditions and seed germination under very-low-fluence conditions) and in the cytoplasm (e.g. negative gravitropism in blue light and red-enhanced phototropism). Promotes seed germination, suppression of hypocotyl elongation, and randomization of hypocotyl growth orientation in far-red light; these responses to far-red light are repressed by UNE10/PIF8. Stabilizes UNE10/PIF8 but sequesters PIF3/PAP3 from its target genes promoters in far-red light. This chain is Phytochrome A, found in Arabidopsis thaliana (Mouse-ear cress).